The chain runs to 281 residues: sn-glycerol-3-phosphate transport system permease protein UgpE (281 aa).

Helical transmembrane passes span 16–36 (LILG…AATL), 85–105 (FSIT…IVWF), 113–133 (FFWM…FPTV), 142–162 (LDSY…TFLF), 202–222 (ALFV…LLII), and 247–267 (WNSV…IVLV). The 192-residue stretch at 77–268 (LLNSFVMAFS…IPPVVIVLVM (192 aa)) folds into the ABC transmembrane type-1 domain.

It belongs to the binding-protein-dependent transport system permease family. UgpAE subfamily. The complex is composed of two ATP-binding proteins (UgpC), two transmembrane proteins (UgpA and UgpE) and a solute-binding protein (UgpB).

It is found in the cell inner membrane. Part of the ABC transporter complex UgpBAEC involved in sn-glycerol-3-phosphate (G3P) import. Probably responsible for the translocation of the substrate across the membrane. The polypeptide is sn-glycerol-3-phosphate transport system permease protein UgpE (ugpE) (Shigella dysenteriae serotype 1 (strain Sd197)).